The chain runs to 136 residues: ATP synthase epsilon chain (136 aa).

The segment at 95–115 (DFSEAQSRLEEANKGSDRREQ) is disordered. The span at 101 to 115 (SRLEEANKGSDRREQ) shows a compositional bias: basic and acidic residues.

The protein belongs to the ATPase epsilon chain family. In terms of assembly, F-type ATPases have 2 components, CF(1) - the catalytic core - and CF(0) - the membrane proton channel. CF(1) has five subunits: alpha(3), beta(3), gamma(1), delta(1), epsilon(1). CF(0) has three main subunits: a, b and c.

Its subcellular location is the cellular thylakoid membrane. Produces ATP from ADP in the presence of a proton gradient across the membrane. This chain is ATP synthase epsilon chain, found in Rippkaea orientalis (strain PCC 8801 / RF-1) (Cyanothece sp. (strain PCC 8801)).